The primary structure comprises 91 residues: uncharacterized protein (91 aa).

This is an uncharacterized protein from Homo sapiens (Human).